The primary structure comprises 250 residues: MPASPLRLGVNVDHVATLRNARGGRNPDPVRAALLAIEAGADGITAHLREDRRHIRDEDMARLKAEISKPLNFEMAATDDMMRISLATRPHAVCLVPERRQEVTTEGGLDVVGQHNALAPYIARLNDAGIRVSLFIAADPAQIEMAARLRAPVIEIHTGAWCDAVVDGHTEKADAEWKRIVAGAKLAKDAGLEVHAGHGLDYATAETIAALPDIMELNIGYYMIGEALFVGLAETVRSMRAAMDRGRSRA.

A 3-amino-2-oxopropyl phosphate-binding site is contributed by Asn11. Asp13–His14 provides a ligand contact to 1-deoxy-D-xylulose 5-phosphate. 3-amino-2-oxopropyl phosphate is bound at residue Arg22. Residue His47 is the Proton acceptor of the active site. Residues Arg49 and His54 each contribute to the 1-deoxy-D-xylulose 5-phosphate site. The active-site Proton acceptor is Glu74. Thr104 contributes to the 1-deoxy-D-xylulose 5-phosphate binding site. Residue His198 is the Proton donor of the active site. Residues Gly199 and Gly220–Tyr221 each bind 3-amino-2-oxopropyl phosphate.

This sequence belongs to the PNP synthase family. As to quaternary structure, homooctamer; tetramer of dimers.

Its subcellular location is the cytoplasm. The catalysed reaction is 3-amino-2-oxopropyl phosphate + 1-deoxy-D-xylulose 5-phosphate = pyridoxine 5'-phosphate + phosphate + 2 H2O + H(+). It functions in the pathway cofactor biosynthesis; pyridoxine 5'-phosphate biosynthesis; pyridoxine 5'-phosphate from D-erythrose 4-phosphate: step 5/5. Catalyzes the complicated ring closure reaction between the two acyclic compounds 1-deoxy-D-xylulose-5-phosphate (DXP) and 3-amino-2-oxopropyl phosphate (1-amino-acetone-3-phosphate or AAP) to form pyridoxine 5'-phosphate (PNP) and inorganic phosphate. The polypeptide is Pyridoxine 5'-phosphate synthase (Bradyrhizobium diazoefficiens (strain JCM 10833 / BCRC 13528 / IAM 13628 / NBRC 14792 / USDA 110)).